A 150-amino-acid chain; its full sequence is Ribonuclease pancreatic (150 aa).

Residues 1–26 (MALKSLVLLSLLVLVLLLVRVQPSLG) form the signal peptide. Lysine 27 and lysine 33 each carry an N-linked (Glc) (glycation) lysine; in vitro glycan. Lysine 33 and arginine 36 together coordinate substrate. Histidine 38 (proton acceptor) is an active-site residue. Cystine bridges form between cysteine 52–cysteine 110, cysteine 66–cysteine 121, cysteine 84–cysteine 136, and cysteine 91–cysteine 98. Asparagine 60 is a glycosylation site (N-linked (GlcNAc...) asparagine; partial). N-linked (Glc) (glycation) lysine; in vitro glycosylation is found at lysine 63 and lysine 67. Substrate is bound by residues 67–71 (KPVNT), lysine 92, and arginine 111. The Proton donor role is filled by histidine 145.

The protein belongs to the pancreatic ribonuclease family. Interacts with and forms tight 1:1 complexes with RNH1. Dimerization of two such complexes may occur. Interaction with RNH1 inhibits this protein. Monomer. In terms of tissue distribution, pancreas.

Its subcellular location is the secreted. It carries out the reaction an [RNA] containing cytidine + H2O = an [RNA]-3'-cytidine-3'-phosphate + a 5'-hydroxy-ribonucleotide-3'-[RNA].. It catalyses the reaction an [RNA] containing uridine + H2O = an [RNA]-3'-uridine-3'-phosphate + a 5'-hydroxy-ribonucleotide-3'-[RNA].. Its function is as follows. Endonuclease that catalyzes the cleavage of RNA on the 3' side of pyrimidine nucleotides. Acts on single-stranded and double-stranded RNA. This is Ribonuclease pancreatic (RNASE1) from Bos taurus (Bovine).